Here is a 555-residue protein sequence, read N- to C-terminus: Cytochrome P450 monooxygeanse terQ (555 aa).

Residues 10-30 (VPAHAWPTITVAGAVMVVVLL) traverse the membrane as a helical segment. C479 is a binding site for heme. Residues 535–555 (DAGNTARVDPGAPDGVASEPS) are disordered.

The protein belongs to the cytochrome P450 family. The cofactor is heme.

The protein resides in the membrane. The protein operates within secondary metabolite biosynthesis. Functionally, cytochrome P450 monooxygeanse; part of the gene cluster that mediates the biosynthesis of terpendoles, indole-diterpene (IDT) mycotoxins including terpendole I, terpendole K, terpendole C, as well as the kinesin Eg5 inhibitor terpendole E. TerQ is a C11-hydroxylating enzyme that converts paspalline into terpendole E. Is also able to hydroxylate 13-desoxyterpendole I at C-13 to produce terpendole I. Terpendoles biosynthesis begins with the synthesis of geranylgeranyl diphosphate (GGPP) by a yet unidentified GGPP synthase. Condensation of indole-3-glycerol phosphate with GGPP by the prenyltransferase terC then forms 3-geranylgeranylindole (3-GGI), followed by epoxidation and cyclization of this intermediate (by the FAD-dependent monooxygeanse terM and the terpene cyclase terB) to form paspaline. The cytochrome monooxygenase terQ then hydroxylates paspalline at C-11 to yield terpendole E. The cytochrome monooxygenase terP converts terpendole E to 13-desoxyterpendole I, and terQ converts 13-desoxyterpendole I into terpendole I. TerF and terK are required for conversion of terpendole I to terpendole C which is further converted to terpendole K. The protein is Cytochrome P450 monooxygeanse terQ of Tolypocladium album (Soil fungus).